A 67-amino-acid polypeptide reads, in one-letter code: Large ribosomal subunit protein bL35 (67 aa).

The protein belongs to the bacterial ribosomal protein bL35 family.

This is Large ribosomal subunit protein bL35 from Picosynechococcus sp. (strain ATCC 27264 / PCC 7002 / PR-6) (Agmenellum quadruplicatum).